Reading from the N-terminus, the 176-residue chain is Ribosome maturation factor RimM (176 aa).

Residues 93–166 enclose the PRC barrel domain; that stretch reads ADEYYHADLI…QVVIEPPNEI (74 aa).

It belongs to the RimM family. As to quaternary structure, binds ribosomal protein uS19.

Its subcellular location is the cytoplasm. An accessory protein needed during the final step in the assembly of 30S ribosomal subunit, possibly for assembly of the head region. Essential for efficient processing of 16S rRNA. May be needed both before and after RbfA during the maturation of 16S rRNA. It has affinity for free ribosomal 30S subunits but not for 70S ribosomes. The chain is Ribosome maturation factor RimM from Rhodopseudomonas palustris (strain ATCC BAA-98 / CGA009).